We begin with the raw amino-acid sequence, 374 residues long: Coiled-coil domain-containing protein 89 (374 aa).

Residues 1–38 (MRAPMPQKEQAPRMDTSPPEERLEKQNEKLNNQEEEME) form a disordered region. The residue at position 16 (threonine 16) is a Phosphothreonine. Positions 19 to 32 (PEERLEKQNEKLNN) are enriched in basic and acidic residues. A coiled-coil region spans residues 19-350 (PEERLEKQNE…YDELRLQSEA (332 aa)).

It belongs to the CCDC89 family. Interacts with HEY1.

It is found in the cytoplasm. The protein localises to the nucleus. This is Coiled-coil domain-containing protein 89 (CCDC89) from Macaca fascicularis (Crab-eating macaque).